A 781-amino-acid polypeptide reads, in one-letter code: Probable beta-D-xylosidase 5 (781 aa).

A signal peptide spans 1–23 (MSIRRFVRLSLLIIALVSSLCES). N-linked (GlcNAc...) asparagine glycosylation is found at N43, N103, and N123. The active site involves D291. N-linked (GlcNAc...) asparagine glycans are attached at residues N342, N424, N504, N543, N601, and N653.

Belongs to the glycosyl hydrolase 3 family.

It is found in the secreted. Its subcellular location is the extracellular space. The protein resides in the extracellular matrix. This Arabidopsis thaliana (Mouse-ear cress) protein is Probable beta-D-xylosidase 5 (BXL5).